Here is a 236-residue protein sequence, read N- to C-terminus: 2-C-methyl-D-erythritol 4-phosphate cytidylyltransferase (236 aa).

This sequence belongs to the IspD/TarI cytidylyltransferase family. IspD subfamily. Homodimer.

It catalyses the reaction 2-C-methyl-D-erythritol 4-phosphate + CTP + H(+) = 4-CDP-2-C-methyl-D-erythritol + diphosphate. It functions in the pathway isoprenoid biosynthesis; isopentenyl diphosphate biosynthesis via DXP pathway; isopentenyl diphosphate from 1-deoxy-D-xylulose 5-phosphate: step 2/6. In terms of biological role, catalyzes the formation of 4-diphosphocytidyl-2-C-methyl-D-erythritol from CTP and 2-C-methyl-D-erythritol 4-phosphate (MEP). The chain is 2-C-methyl-D-erythritol 4-phosphate cytidylyltransferase from Escherichia coli O17:K52:H18 (strain UMN026 / ExPEC).